The primary structure comprises 343 residues: MKVSIIGATGYGGLELIRLLHQHASVDIATLHSFSAQSETLATFYPHLKDLEASPLEKINPTEIIEKSDTVFIATPSGIAKDIALPYVDAGLNVIDLSGDFRLKDRQLYEKWYGKSAAPTEYIAKAEYGLAEFREKKETTFIANPGCYATATLLGLAPLTKNKLIDPTSIIVDAKSGISGAGKVPSASTHFTETNENMTLYKMNSHQHIPEIMQQLTKWDESIPAIQFSTSLIPITRGIFTTIYVKPKNPITQKELHTLYESTYENAPFVRIQPENVYPTVKQVTASNYCDIGLAYNEKTNVITIVSVIDNLVKGAAGQAIQNLNIMANFAESDGLRFIPVYP.

Residue Cys147 is part of the active site.

Belongs to the NAGSA dehydrogenase family. Type 1 subfamily.

The protein localises to the cytoplasm. It catalyses the reaction N-acetyl-L-glutamate 5-semialdehyde + phosphate + NADP(+) = N-acetyl-L-glutamyl 5-phosphate + NADPH + H(+). The protein operates within amino-acid biosynthesis; L-arginine biosynthesis; N(2)-acetyl-L-ornithine from L-glutamate: step 3/4. In terms of biological role, catalyzes the NADPH-dependent reduction of N-acetyl-5-glutamyl phosphate to yield N-acetyl-L-glutamate 5-semialdehyde. The sequence is that of N-acetyl-gamma-glutamyl-phosphate reductase from Listeria monocytogenes serotype 4a (strain HCC23).